We begin with the raw amino-acid sequence, 574 residues long: Pyruvate kinase PKLR (574 aa).

Phosphoserine is present on residues S2, S19, S26, and S43. R116 is a substrate binding site. K(+)-binding residues include N118, S120, D156, and T157. An ATP-binding site is contributed by 118-121 (NFSH). Positions 163 and 250 each coordinate ATP. S292 bears the Phosphoserine mark. K313 provides a ligand contact to substrate. Residue E315 participates in Mn(2+) binding. Substrate-binding residues include G338, D339, and T371. D339 contributes to the Mn(2+) binding site. Residues 475-480 (TKTGRS), W525, R532, and 559-564 (RPGSGY) each bind beta-D-fructose 1,6-bisphosphate.

The protein belongs to the pyruvate kinase family. As to quaternary structure, homotetramer. The cofactor is Mg(2+). Mn(2+) serves as cofactor. Requires K(+) as cofactor.

The enzyme catalyses pyruvate + ATP = phosphoenolpyruvate + ADP + H(+). It functions in the pathway carbohydrate degradation; glycolysis; pyruvate from D-glyceraldehyde 3-phosphate: step 5/5. Allosterically activated by fructose 1,6-bisphosphate. Pyruvate kinase that catalyzes the conversion of phosphoenolpyruvate to pyruvate with the synthesis of ATP, and which plays a key role in glycolysis. This is Pyruvate kinase PKLR (Pklr) from Rattus norvegicus (Rat).